The sequence spans 293 residues: Shikimate dehydrogenase (NADP(+)) (293 aa).

Shikimate contacts are provided by residues 20-22 (SLT) and Thr-72. The Proton acceptor role is filled by Lys-76. 2 residues coordinate shikimate: Asn-97 and Asp-112. Residues 136 to 140 (GAGGA) and Ile-230 each bind NADP(+). Residue Tyr-232 participates in shikimate binding. Gly-253 is an NADP(+) binding site.

Belongs to the shikimate dehydrogenase family. As to quaternary structure, homodimer.

The catalysed reaction is shikimate + NADP(+) = 3-dehydroshikimate + NADPH + H(+). It functions in the pathway metabolic intermediate biosynthesis; chorismate biosynthesis; chorismate from D-erythrose 4-phosphate and phosphoenolpyruvate: step 4/7. In terms of biological role, involved in the biosynthesis of the chorismate, which leads to the biosynthesis of aromatic amino acids. Catalyzes the reversible NADPH linked reduction of 3-dehydroshikimate (DHSA) to yield shikimate (SA). The protein is Shikimate dehydrogenase (NADP(+)) of Pseudarthrobacter chlorophenolicus (strain ATCC 700700 / DSM 12829 / CIP 107037 / JCM 12360 / KCTC 9906 / NCIMB 13794 / A6) (Arthrobacter chlorophenolicus).